Reading from the N-terminus, the 403-residue chain is Alkaline protease 1 (403 aa).

The N-terminal stretch at 1-21 is a signal peptide; the sequence is MQSIKRTLLLLGAILPAVLGA. A propeptide spanning residues 22 to 125 is cleaved from the precursor; sequence PVQETRRAAE…QIYYLDGLTT (104 aa). One can recognise an Inhibitor I9 domain in the interval 36–120; that stretch reads KYIVTFKPGI…YVEEDQIYYL (85 aa). One can recognise a Peptidase S8 domain in the interval 130-403; that stretch reads PWGLGSISHK…PNLLAYNGNA (274 aa). Catalysis depends on charge relay system residues aspartate 162 and histidine 193. An N-linked (GlcNAc...) asparagine glycan is attached at asparagine 253. Serine 349 (charge relay system) is an active-site residue.

Belongs to the peptidase S8 family.

Its subcellular location is the secreted. The enzyme catalyses Hydrolysis of proteins with broad specificity, and of Bz-Arg-OEt &gt; Ac-Tyr-OEt. Does not hydrolyze peptide amides.. Its function is as follows. Secreted alkaline protease that allows assimilation of proteinaceous substrates. The polypeptide is Alkaline protease 1 (alp1) (Aspergillus flavus (strain ATCC 200026 / FGSC A1120 / IAM 13836 / NRRL 3357 / JCM 12722 / SRRC 167)).